The following is a 170-amino-acid chain: Cyclic pyranopterin monophosphate synthase (170 aa).

Residues 75 to 77 and 113 to 114 contribute to the substrate site; these read LCH and ME. Asp128 is an active-site residue.

This sequence belongs to the MoaC family. In terms of assembly, homohexamer; trimer of dimers.

It carries out the reaction (8S)-3',8-cyclo-7,8-dihydroguanosine 5'-triphosphate = cyclic pyranopterin phosphate + diphosphate. It participates in cofactor biosynthesis; molybdopterin biosynthesis. In terms of biological role, catalyzes the conversion of (8S)-3',8-cyclo-7,8-dihydroguanosine 5'-triphosphate to cyclic pyranopterin monophosphate (cPMP). The protein is Cyclic pyranopterin monophosphate synthase of Pelotomaculum thermopropionicum (strain DSM 13744 / JCM 10971 / SI).